An 886-amino-acid chain; its full sequence is Semaphorin-6B (886 aa).

The signal sequence occupies residues 1-26 (MWTPRVPPPRPALSFFLLLLLGVTYG). The Extracellular segment spans residues 27-605 (LFPEEPPPLS…VSVNLLVTSS (579 aa)). Positions 32–525 (PPPLSVAPRD…FPRCVVRVPV (494 aa)) constitute a Sema domain. N75 carries an N-linked (GlcNAc...) asparagine glycan. Disulfide bonds link C117-C127 and C145-C154. 2 N-linked (GlcNAc...) asparagine glycosylation sites follow: N156 and N292. Intrachain disulfides connect C268–C379 and C293–C338. Residues N387, N442, and N463 are each glycosylated (N-linked (GlcNAc...) asparagine). 4 cysteine pairs are disulfide-bonded: C487–C519, C528–C546, C534–C580, and C538–C554. The chain crosses the membrane as a helical span at residues 606 to 626 (VAAFVVGAVVSGFSVGWFVGL). The Cytoplasmic portion of the chain corresponds to 627 to 886 (RERRELARRK…TGERTAPPVP (260 aa)). Disordered stretches follow at residues 655-677 (RLGE…PGGP), 697-731 (HGGP…AHAL), and 761-886 (EQPQ…PPVP). Residues 662–674 (TGPGGRGGAGGGP) show a composition bias toward gly residues. The residue at position 667 (R667) is an Omega-N-methylarginine. Over residues 707-718 (LLPTPEQTPLPQ) the composition is skewed to low complexity.

This sequence belongs to the semaphorin family. As to quaternary structure, homodimer. Binds specifically the SH3 domain of the protooncogene C-SRC. In adulthood, it is expressed ubiquitously.

The protein localises to the cell membrane. In terms of biological role, functions as a cell surface repellent for mossy fibers of developing neurons in the hippocampus where it plays a role in axon guidance. May function through the PLXNA4 receptor expressed by mossy cell axons. The polypeptide is Semaphorin-6B (Sema6b) (Mus musculus (Mouse)).